The chain runs to 572 residues: Urease subunit alpha (572 aa).

The Urease domain maps to 134 to 572 (GGIDAHVHFI…LPMAQRYFLF (439 aa)). 3 residues coordinate Ni(2+): His139, His141, and Lys222. Lys222 is subject to N6-carboxylysine. His224 provides a ligand contact to substrate. Ni(2+)-binding residues include His251 and His277. The Proton donor role is filled by His325. A Ni(2+)-binding site is contributed by Asp365.

This sequence belongs to the metallo-dependent hydrolases superfamily. Urease alpha subunit family. Heterotrimer of UreA (gamma), UreB (beta) and UreC (alpha) subunits. Three heterotrimers associate to form the active enzyme. Ni cation is required as a cofactor. In terms of processing, carboxylation allows a single lysine to coordinate two nickel ions.

Its subcellular location is the cytoplasm. The enzyme catalyses urea + 2 H2O + H(+) = hydrogencarbonate + 2 NH4(+). It functions in the pathway nitrogen metabolism; urea degradation; CO(2) and NH(3) from urea (urease route): step 1/1. This chain is Urease subunit alpha, found in Synechococcus sp. (strain JA-2-3B'a(2-13)) (Cyanobacteria bacterium Yellowstone B-Prime).